Reading from the N-terminus, the 323-residue chain is ADP-ribose glycohydrolase MACROD1 (323 aa).

An N6-succinyllysine mark is found at Lys-94, Lys-101, and Lys-127. Lys-136 participates in a covalent cross-link: Glycyl lysine isopeptide (Lys-Gly) (interchain with G-Cter in SUMO2). Residues 139-320 (DPKYKKDKQL…IYRERLPHYF (182 aa)) form the Macro domain. 157 to 159 (GDI) serves as a coordination point for substrate. At Lys-161 the chain carries N6-acetyllysine. Substrate-binding positions include 170–172 (AAN), 177–182 (GGGGVD), 265–271 (ISTGVFG), and Phe-304.

It belongs to the MacroD-type family. MacroD1/2-like subfamily. As to quaternary structure, interacts with ESR1; Interacts in a manner that is estrogen independent but is enhanced by estrogen. Interacts (via macro domain) with AR.

It is found in the nucleus. It catalyses the reaction 3''-O-acetyl-ADP-D-ribose + H2O = ADP-D-ribose + acetate + H(+). The catalysed reaction is 2''-O-acetyl-ADP-D-ribose + H2O = ADP-D-ribose + acetate + H(+). It carries out the reaction 4-O-(ADP-D-ribosyl)-L-aspartyl-[protein] + H2O = L-aspartyl-[protein] + ADP-D-ribose + H(+). The enzyme catalyses 5-O-(ADP-D-ribosyl)-L-glutamyl-[protein] + H2O = L-glutamyl-[protein] + ADP-D-ribose + H(+). It catalyses the reaction alpha-NAD(+) + H2O = ADP-D-ribose + nicotinamide + H(+). Subject to competitive inhibition by the product ADP-ribose. Removes ADP-ribose from aspartate and glutamate residues in proteins bearing a single ADP-ribose moiety. Inactive towards proteins bearing poly-ADP-ribose. Deacetylates O-acetyl-ADP ribose, a signaling molecule generated by the deacetylation of acetylated lysine residues in histones and other proteins. Plays a role in estrogen signaling. Binds to androgen receptor (AR) and amplifies the transactivation function of AR in response to androgen. May play an important role in carcinogenesis and/or progression of hormone-dependent cancers by feed-forward mechanism that activates ESR1 transactivation. Could be an ESR1 coactivator, providing a positive feedback regulatory loop for ESR1 signal transduction. Could be involved in invasive growth by down-regulating CDH1 in endometrial cancer cells. Enhances ESR1-mediated transcription activity. The polypeptide is ADP-ribose glycohydrolase MACROD1 (Mus musculus (Mouse)).